A 429-amino-acid polypeptide reads, in one-letter code: Probable M18 family aminopeptidase 2 (429 aa).

Positions 82, 156, and 401 each coordinate Zn(2+).

The protein belongs to the peptidase M18 family. Zn(2+) serves as cofactor.

The chain is Probable M18 family aminopeptidase 2 from Ectopseudomonas mendocina (strain ymp) (Pseudomonas mendocina).